The sequence spans 339 residues: DNA-directed RNA polymerase subunit alpha (339 aa).

The interval Met-1–Glu-233 is alpha N-terminal domain (alpha-NTD). The interval Lys-264–Phe-339 is alpha C-terminal domain (alpha-CTD).

Belongs to the RNA polymerase alpha chain family. In plastids the minimal PEP RNA polymerase catalytic core is composed of four subunits: alpha, beta, beta', and beta''. When a (nuclear-encoded) sigma factor is associated with the core the holoenzyme is formed, which can initiate transcription.

The protein localises to the plastid. Its subcellular location is the chloroplast. It catalyses the reaction RNA(n) + a ribonucleoside 5'-triphosphate = RNA(n+1) + diphosphate. In terms of biological role, DNA-dependent RNA polymerase catalyzes the transcription of DNA into RNA using the four ribonucleoside triphosphates as substrates. In Bromus inermis (Smooth brome grass), this protein is DNA-directed RNA polymerase subunit alpha.